Reading from the N-terminus, the 114-residue chain is Monothiol glutaredoxin-S8 (114 aa).

One can recognise a Glutaredoxin domain in the interval 1–113; it reads MDRVTRLASQ…PLLRDAGALW (113 aa). Residue C21 participates in [2Fe-2S] cluster binding.

It belongs to the glutaredoxin family. CC-type subfamily.

The protein localises to the cytoplasm. Its function is as follows. May only reduce GSH-thiol disulfides, but not protein disulfides. The sequence is that of Monothiol glutaredoxin-S8 (GRXS8) from Oryza sativa subsp. japonica (Rice).